The primary structure comprises 125 residues: Small ribosomal subunit protein uS13 (125 aa).

A disordered region spans residues 97–125; it reads PLRGQRTKTNARTRKGKRKTVANKKMASK.

The protein belongs to the universal ribosomal protein uS13 family. As to quaternary structure, part of the 30S ribosomal subunit. Forms a loose heterodimer with protein S19. Forms two bridges to the 50S subunit in the 70S ribosome.

Located at the top of the head of the 30S subunit, it contacts several helices of the 16S rRNA. In the 70S ribosome it contacts the 23S rRNA (bridge B1a) and protein L5 of the 50S subunit (bridge B1b), connecting the 2 subunits; these bridges are implicated in subunit movement. Contacts the tRNAs in the A and P-sites. The protein is Small ribosomal subunit protein uS13 of Borrelia hermsii (strain HS1 / DAH).